We begin with the raw amino-acid sequence, 397 residues long: 2,3,4,5-tetrahydropyridine-2,6-dicarboxylate N-succinyltransferase (397 aa).

The Acyl-anhydride intermediate role is filled by glutamate 265. Succinyl-CoA is bound by residues arginine 267, glycine 282, serine 285, alanine 308, 323 to 324 (DA), glycine 331, lysine 360, and 373 to 376 (RQNS).

It belongs to the type 2 tetrahydrodipicolinate N-succinyltransferase family. As to quaternary structure, homotrimer.

Its subcellular location is the cytoplasm. The enzyme catalyses (S)-2,3,4,5-tetrahydrodipicolinate + succinyl-CoA + H2O = (S)-2-succinylamino-6-oxoheptanedioate + CoA. It participates in amino-acid biosynthesis; L-lysine biosynthesis via DAP pathway; LL-2,6-diaminopimelate from (S)-tetrahydrodipicolinate (succinylase route): step 1/3. Functionally, catalyzes the conversion of the cyclic tetrahydrodipicolinate (THDP) into the acyclic N-succinyl-L-2-amino-6-oxopimelate using succinyl-CoA. The polypeptide is 2,3,4,5-tetrahydropyridine-2,6-dicarboxylate N-succinyltransferase (Sulfurovum sp. (strain NBC37-1)).